Consider the following 301-residue polypeptide: 4-hydroxy-tetrahydrodipicolinate synthase (301 aa).

Pyruvate is bound at residue threonine 55. The Proton donor/acceptor role is filled by tyrosine 143. Lysine 171 functions as the Schiff-base intermediate with substrate in the catalytic mechanism. Isoleucine 213 contributes to the pyruvate binding site.

It belongs to the DapA family. In terms of assembly, homotetramer; dimer of dimers.

It is found in the cytoplasm. It catalyses the reaction L-aspartate 4-semialdehyde + pyruvate = (2S,4S)-4-hydroxy-2,3,4,5-tetrahydrodipicolinate + H2O + H(+). It participates in amino-acid biosynthesis; L-lysine biosynthesis via DAP pathway; (S)-tetrahydrodipicolinate from L-aspartate: step 3/4. Its function is as follows. Catalyzes the condensation of (S)-aspartate-beta-semialdehyde [(S)-ASA] and pyruvate to 4-hydroxy-tetrahydrodipicolinate (HTPA). In Psychrobacter arcticus (strain DSM 17307 / VKM B-2377 / 273-4), this protein is 4-hydroxy-tetrahydrodipicolinate synthase.